The chain runs to 156 residues: Endoribonuclease YbeY (156 aa).

Zn(2+) contacts are provided by His117, His121, and His127.

Belongs to the endoribonuclease YbeY family. It depends on Zn(2+) as a cofactor.

It is found in the cytoplasm. Single strand-specific metallo-endoribonuclease involved in late-stage 70S ribosome quality control and in maturation of the 3' terminus of the 16S rRNA. The protein is Endoribonuclease YbeY of Herminiimonas arsenicoxydans.